A 199-amino-acid polypeptide reads, in one-letter code: ATP-dependent Clp protease proteolytic subunit (199 aa).

Ser-98 acts as the Nucleophile in catalysis. His-123 is a catalytic residue.

The protein belongs to the peptidase S14 family. In terms of assembly, fourteen ClpP subunits assemble into 2 heptameric rings which stack back to back to give a disk-like structure with a central cavity, resembling the structure of eukaryotic proteasomes.

The protein resides in the cytoplasm. The enzyme catalyses Hydrolysis of proteins to small peptides in the presence of ATP and magnesium. alpha-casein is the usual test substrate. In the absence of ATP, only oligopeptides shorter than five residues are hydrolyzed (such as succinyl-Leu-Tyr-|-NHMec, and Leu-Tyr-Leu-|-Tyr-Trp, in which cleavage of the -Tyr-|-Leu- and -Tyr-|-Trp bonds also occurs).. Cleaves peptides in various proteins in a process that requires ATP hydrolysis. Has a chymotrypsin-like activity. Plays a major role in the degradation of misfolded proteins. The sequence is that of ATP-dependent Clp protease proteolytic subunit from Ehrlichia chaffeensis (strain ATCC CRL-10679 / Arkansas).